Consider the following 485-residue polypeptide: Serine/threonine-protein kinase dst4 (485 aa).

Residues Phe21–Ile278 enclose the Protein kinase domain. ATP-binding positions include Ile27–Val35 and Lys50. Asp142 acts as the Proton acceptor in catalysis. Disordered stretches follow at residues Arg304–Leu343, Val360–Val424, and Ser436–Asp485. Acidic residues predominate over residues Glu310–Asp324. Low complexity predominate over residues Ser370–Thr393. 2 stretches are compositionally biased toward acidic residues: residues Asp406–Gly417 and Ser450–Gly468. The span at Val474–Asp485 shows a compositional bias: polar residues.

This sequence belongs to the protein kinase superfamily. STE Ser/Thr protein kinase family. STE20 subfamily. Mg(2+) serves as cofactor.

The catalysed reaction is L-seryl-[protein] + ATP = O-phospho-L-seryl-[protein] + ADP + H(+). It carries out the reaction L-threonyl-[protein] + ATP = O-phospho-L-threonyl-[protein] + ADP + H(+). This is Serine/threonine-protein kinase dst4 from Dictyostelium discoideum (Social amoeba).